The following is a 2363-amino-acid chain: Highly reducing polyketide synthase cnsI (2363 aa).

Residues 14–440 (PEPIAIIGMS…GSNAHAIVES (427 aa)) form the Ketosynthase family 3 (KS3) domain. Active-site for beta-ketoacyl synthase activity residues include Cys-187, His-322, and His-363. Residues 546 to 854 (LAFVFTGQGA…FLQVLKSINA (309 aa)) are malonyl-CoA:ACP transacylase (MAT) domain. Catalysis depends on Ser-638, which acts as the For malonyltransferase activity. Positions 938–1068 (HDLLGSPMDF…GTFTLHYDAR (131 aa)) are N-terminal hotdog fold. Positions 938–1224 (HDLLGSPMDF…RLDSIASDVS (287 aa)) are dehydratase (DH) domain. The PKS/mFAS DH domain maps to 938–1246 (HDLLGSPMDF…LGPVPMSKVP (309 aa)). Residue His-970 is the Proton acceptor; for dehydratase activity of the active site. The C-terminal hotdog fold stretch occupies residues 1089–1246 (TAECETNRDA…LGPVPMSKVP (158 aa)). Asp-1159 functions as the Proton donor; for dehydratase activity in the catalytic mechanism. The segment at 1669 to 1976 (GGQWVEDRQL…ARQTGISVAI (308 aa)) is enoylreductase (ER) domain. The segment at 2001-2177 (TYLLAGGLGM…PGHSIDIGLV (177 aa)) is catalytic ketoreductase (KRc) domain. The region spanning 2279–2357 (EDASYVVNQA…VLSEKIAAQS (79 aa)) is the Carrier domain. Position 2317 is an O-(pantetheine 4'-phosphoryl)serine (Ser-2317).

The protein operates within alkaloid biosynthesis. Functionally, highly reducing polyketide synthase; part of the gene cluster that mediates the biosynthesis of communesins, a prominent class of indole alkaloids with great potential as pharmaceuticals. Communesins are biosynthesized by the coupling of tryptamine and aurantioclavine, two building blocks derived from L-tryptophan. The L-tryptophan decarboxylase cnsB converts L-tryptophan to tryptamine, whereas the tryptophan dimethylallyltransferase cnsF converts L-tryptophan to 4-dimethylallyl tryptophan which is further transformed to aurantioclavine by the aurantioclavine synthase cnsA, probably aided by the catalase cnsD. The cytochrome P450 monooxygenase cnsC catalyzes the heterodimeric coupling between the two different indole moieties, tryptamine and aurantioclavine, to construct vicinal quaternary stereocenters and yield the heptacyclic communesin scaffold. The O-methyltransferase cnsE then methylates the communesin scaffold to produce communesin K, the simplest characterized communesin that contains the heptacyclic core. The dioxygenase cnsJ converts communesin K into communesin I. Acylation to introduce the hexadienyl group at position N16 of communesin I by the acyltransferase cnsK leads to the production of communesin B. The hexadienyl group is produced by the highly reducing polyketide synthase cnsI, before being hydrolytically removed from cnsI by the serine hydrolase cnsH, converted into hexadienyl-CoA by the CoA ligase cnsG, and then transferred to communesin I by cnsK. Surprisingly, cnsK may also be a promiscuous acyltransferase that can tolerate a range of acyl groups, including acetyl-, propionyl-, and butyryl-CoA, which lead to communesins A, G and H respectively. The roles of the alpha-ketoglutarate-dependent dioxygenases cnsM and cnsP have still to be determined. In Penicillium expansum (Blue mold rot fungus), this protein is Highly reducing polyketide synthase cnsI.